A 353-amino-acid chain; its full sequence is Methylthioribose-1-phosphate isomerase (353 aa).

Substrate is bound by residues 51-53, arginine 94, and glutamine 203; that span reads RGA. Residue aspartate 244 is the Proton donor of the active site. A substrate-binding site is contributed by 254-255; the sequence is NK.

Belongs to the eIF-2B alpha/beta/delta subunits family. MtnA subfamily.

The enzyme catalyses 5-(methylsulfanyl)-alpha-D-ribose 1-phosphate = 5-(methylsulfanyl)-D-ribulose 1-phosphate. It participates in amino-acid biosynthesis; L-methionine biosynthesis via salvage pathway; L-methionine from S-methyl-5-thio-alpha-D-ribose 1-phosphate: step 1/6. In terms of biological role, catalyzes the interconversion of methylthioribose-1-phosphate (MTR-1-P) into methylthioribulose-1-phosphate (MTRu-1-P). The sequence is that of Methylthioribose-1-phosphate isomerase from Nostoc punctiforme (strain ATCC 29133 / PCC 73102).